We begin with the raw amino-acid sequence, 305 residues long: Superkiller complex protein 8 (305 aa).

7 WD repeats span residues 14–57, 62–101, 104–143, 146–187, 188–227, 230–269, and 272–305; these read AHED…LEMQ, GHQL…QIRS, AGPV…KEYS, TRGK…HTLE, GHAM…LAAT, GHGS…CVHT, and DHQD…DCPI.

Belongs to the SKI8 family. Component of the PAF1 complex. Component of the SKI complex.

It localises to the nucleus. The protein localises to the cytoplasm. In terms of biological role, component of the PAF1 complex (PAF1C) which has multiple functions during transcription by RNA polymerase II and is implicated in regulation of development and maintenance of embryonic stem cell pluripotency. PAF1C associates with RNA polymerase II through interaction with POLR2A CTD non-phosphorylated and 'Ser-2'- and 'Ser-5'-phosphorylated forms and is involved in transcriptional elongation, acting both independently and synergistically with TCEA1 and in cooperation with the DSIF complex and HTATSF1. Also acts as a component of the SKI complex, a multiprotein complex that assists the RNA-degrading exosome during the mRNA decay and quality-control pathways. The SKI complex catalyzes mRNA extraction from 80S ribosomal complexes in the 3'-5' direction and channels mRNA to the cytosolic exosome for degradation. The protein is Superkiller complex protein 8 (skic8) of Xenopus laevis (African clawed frog).